The following is a 233-amino-acid chain: Large ribosomal subunit protein uL1 (233 aa).

It belongs to the universal ribosomal protein uL1 family. Part of the 50S ribosomal subunit.

Binds directly to 23S rRNA. The L1 stalk is quite mobile in the ribosome, and is involved in E site tRNA release. Functionally, protein L1 is also a translational repressor protein, it controls the translation of the L11 operon by binding to its mRNA. In Campylobacter jejuni subsp. doylei (strain ATCC BAA-1458 / RM4099 / 269.97), this protein is Large ribosomal subunit protein uL1.